The following is a 96-amino-acid chain: MACKHLPFLALAGVLLAYLCSQSEAASNFDCCLTYTKNVYHHARNFVGFTTQMADEACDINAIIFHLKSKRSVCADPKQIWVKRILHLLSLRTKKM.

Residues 1–26 form the signal peptide; sequence MACKHLPFLALAGVLLAYLCSQSEAA. Intrachain disulfides connect cysteine 31–cysteine 58 and cysteine 32–cysteine 74.

Belongs to the intercrine beta (chemokine CC) family. In terms of tissue distribution, low levels in thymus and lung.

It is found in the secreted. In terms of biological role, acts as a ligand for C-C chemokine receptor CCR6. Signals through binding and activation of CCR6 and induces a strong chemotactic response and mobilization of intracellular calcium ions. The ligand-receptor pair CCL20-CCR6 is responsible for the chemotaxis of dendritic cells (DC), effector/memory T-cells and B-cells and plays an important role at skin and mucosal surfaces under homeostatic and inflammatory conditions, as well as in pathology, including cancer and autoimmune diseases. CCL20 acts as a chemotactic factor that attracts lymphocytes and, slightly, neutrophils, but not monocytes. Involved in the recruitment of both the pro-inflammatory IL17 producing helper T-cells (Th17) and the regulatory T-cells (Treg) to sites of inflammation. Required for optimal migration of thymic natural regulatory T cells (nTregs) and DN1 early thymocyte progenitor cells. Positively regulates sperm motility and chemotaxis via its binding to CCR6 which triggers Ca2+ mobilization in the sperm which is important for its motility. May be involved in formation and function of the mucosal lymphoid tissues by attracting lymphocytes and dendritic cells towards epithelial cells. This chain is C-C motif chemokine 20 (Ccl20), found in Rattus norvegicus (Rat).